A 379-amino-acid chain; its full sequence is Dual-specificity RNA methyltransferase RlmN (379 aa).

Glutamate 95 acts as the Proton acceptor in catalysis. Residues 101-345 enclose the Radical SAM core domain; it reads EETRGTLCVS…TTVRKTRGDD (245 aa). Cysteine 108 and cysteine 350 are disulfide-bonded. 3 residues coordinate [4Fe-4S] cluster: cysteine 115, cysteine 119, and cysteine 122. Residues 176–177, serine 208, 230–232, and asparagine 307 each bind S-adenosyl-L-methionine; these read GE and SLH. Catalysis depends on cysteine 350, which acts as the S-methylcysteine intermediate.

The protein belongs to the radical SAM superfamily. RlmN family. Requires [4Fe-4S] cluster as cofactor.

It localises to the cytoplasm. It carries out the reaction adenosine(2503) in 23S rRNA + 2 reduced [2Fe-2S]-[ferredoxin] + 2 S-adenosyl-L-methionine = 2-methyladenosine(2503) in 23S rRNA + 5'-deoxyadenosine + L-methionine + 2 oxidized [2Fe-2S]-[ferredoxin] + S-adenosyl-L-homocysteine. The catalysed reaction is adenosine(37) in tRNA + 2 reduced [2Fe-2S]-[ferredoxin] + 2 S-adenosyl-L-methionine = 2-methyladenosine(37) in tRNA + 5'-deoxyadenosine + L-methionine + 2 oxidized [2Fe-2S]-[ferredoxin] + S-adenosyl-L-homocysteine. Specifically methylates position 2 of adenine 2503 in 23S rRNA and position 2 of adenine 37 in tRNAs. m2A2503 modification seems to play a crucial role in the proofreading step occurring at the peptidyl transferase center and thus would serve to optimize ribosomal fidelity. The sequence is that of Dual-specificity RNA methyltransferase RlmN from Burkholderia cenocepacia (strain ATCC BAA-245 / DSM 16553 / LMG 16656 / NCTC 13227 / J2315 / CF5610) (Burkholderia cepacia (strain J2315)).